Reading from the N-terminus, the 368-residue chain is N-acetylneuraminate epimerase (368 aa).

The signal sequence occupies residues 1–19; sequence MNKTITALAIMMASFAANA. Kelch repeat units lie at residues 40 to 84, 86 to 137, 139 to 173, 174 to 219, 222 to 265, 287 to 336, and 338 to 367; these read TVYI…AFID, NLYV…FVHN, KAYV…KINA, YYFD…VNKG, TWLI…VAGG, ENYQ…PWNN, and LLII…VTVQ. Catalysis depends on E228, which acts as the Proton acceptor.

This sequence belongs to the NanM family. In terms of assembly, homodimer.

The protein resides in the periplasm. The enzyme catalyses N-acetyl-alpha-neuraminate = N-acetyl-beta-neuraminate. In terms of biological role, converts alpha-N-acetylneuranimic acid (Neu5Ac) to the beta-anomer, accelerating the equilibrium between the alpha- and beta-anomers. Probably facilitates sialidase-negative bacteria to compete successfully for limited amounts of extracellular Neu5Ac, which is likely taken up in the beta-anomer. In addition, the rapid removal of sialic acid from solution might be advantageous to the bacterium to damp down host responses. In Shigella boydii serotype 4 (strain Sb227), this protein is N-acetylneuraminate epimerase.